Reading from the N-terminus, the 753-residue chain is Neuroendocrine convertase 1 (753 aa).

The N-terminal stretch at 1-27 (MEQRGWTLQCTAFAFFCVWCALSSVKA) is a signal peptide. The propeptide occupies 28–110 (KRQFVNEWAA…QQYEKERSKR (83 aa)). A Peptidase S8 domain is found at 129-450 (QWYLQDTRMT…FGLLNAKALV (322 aa)). Active-site charge relay system residues include aspartate 167 and histidine 208. Cystine bridges form between cysteine 225–cysteine 374 and cysteine 317–cysteine 347. Catalysis depends on serine 382, which acts as the Charge relay system. Residue asparagine 401 is glycosylated (N-linked (GlcNAc...) asparagine). A P/Homo B domain is found at 460–597 (NVPEKKECVV…KLILHGTSSQ (138 aa)). Cysteines 467 and 494 form a disulfide. Positions 633–651 (QKSLNGNLLVPKNSSSSNV) are enriched in polar residues. The tract at residues 633–663 (QKSLNGNLLVPKNSSSSNVEGRRDEQVQGTP) is disordered. Asparagine 645 is a glycosylation site (N-linked (GlcNAc...) asparagine).

It belongs to the peptidase S8 family. Furin subfamily. It depends on Ca(2+) as a cofactor.

It is found in the cytoplasmic vesicle. The protein resides in the secretory vesicle. It carries out the reaction Release of protein hormones, neuropeptides and renin from their precursors, generally by hydrolysis of -Lys-Arg-|- bonds.. Functionally, involved in the processing of hormone and other protein precursors at sites comprised of pairs of basic amino acid residues. Substrates include POMC, renin, enkephalin, dynorphin, somatostatin, insulin and AGRP. This chain is Neuroendocrine convertase 1 (Pcsk1), found in Mus cookii (Cook's mouse).